A 1948-amino-acid polypeptide reads, in one-letter code: Receptor-type tyrosine-protein phosphatase S (1948 aa).

Residues Met-1–Ala-29 form the signal peptide. Residues Glu-30–Gly-1282 are Extracellular-facing. Ig-like C2-type domains lie at Pro-33–Thr-123, Pro-135–Tyr-233, and Pro-245–Thr-327. 2 disulfides stabilise this stretch: Cys-54–Cys-107 and Cys-156–Cys-216. The important for binding to glycosaminoglycan chains stretch occupies residues Lys-68–Lys-72. 2 N-linked (GlcNAc...) asparagine glycosylation sites follow: Asn-263 and Asn-308. A disulfide bridge links Cys-266 with Cys-311. 8 consecutive Fibronectin type-III domains span residues Ala-334 to Gln-424, Ala-429 to Gly-523, Gln-527 to Ser-616, Pro-621 to Asp-718, Pro-723 to Ala-831, Val-832 to Gly-930, His-931 to Asp-1033, and Ser-1036 to Asn-1120. The interval Thr-700–Pro-724 is disordered. The span at Glu-701 to Val-713 shows a compositional bias: low complexity. A glycan (N-linked (GlcNAc...) asparagine) is linked at Asn-733. A glycan (N-linked (GlcNAc...) asparagine) is linked at Asn-940. The helical transmembrane segment at Leu-1283–Ile-1303 threads the bilayer. The Cytoplasmic portion of the chain corresponds to Leu-1304–Thr-1948. Composition is skewed to basic and acidic residues over residues Asp-1311–Thr-1321 and Ala-1331–Glu-1340. Residues Asp-1311–Glu-1340 form a disordered region. Tyrosine-protein phosphatase domains follow at residues Leu-1393–Ala-1648 and Met-1680–Tyr-1939. Substrate contacts are provided by residues Asp-1557, Cys-1589 to Arg-1595, and Gln-1633. The active-site Phosphocysteine intermediate is Cys-1589. The active-site Phosphocysteine intermediate is the Cys-1880.

It belongs to the protein-tyrosine phosphatase family. Receptor class 2A subfamily. Binding to large heparan sulfate proteoglycan structures promotes oligomerization. Binding to chondroitin sulfate proteoglycan does not lead to oligomerization. Interacts (via Ig-like domains) with NTRK3. Interacts (via Ig-like domains) with NTRK1, but does not form detectable complexes with NTRK2. Interacts with PPFIA1, PPFIA2 and PPFIA3. Post-translationally, a cleavage occurs, separating the extracellular domain from the transmembrane segment. This process called 'ectodomain shedding' is thought to be involved in receptor desensitization, signal transduction and/or membrane localization. In terms of tissue distribution, detected in peripheral blood plasmacytoid dendritic cells (at protein level). Detected in all tissues tested except for placenta and liver. Detected in peripheral blood plasmacytoid dendritic cells.

It is found in the cell membrane. It localises to the cell projection. The protein localises to the axon. The protein resides in the perikaryon. Its subcellular location is the cytoplasmic vesicle. It is found in the secretory vesicle. It localises to the synaptic vesicle membrane. The protein localises to the synapse. The protein resides in the synaptosome. Its subcellular location is the postsynaptic density. It is found in the neuron projection. It localises to the growth cone. The enzyme catalyses O-phospho-L-tyrosyl-[protein] + H2O = L-tyrosyl-[protein] + phosphate. Cell surface receptor that binds to glycosaminoglycans, including chondroitin sulfate proteoglycans and heparan sulfate proteoglycan. Binding to chondroitin sulfate and heparan sulfate proteoglycans has opposite effects on PTPRS oligomerization and regulation of neurite outgrowth. Contributes to the inhibition of neurite and axonal outgrowth by chondroitin sulfate proteoglycans, also after nerve transection. Plays a role in stimulating neurite outgrowth in response to the heparan sulfate proteoglycan GPC2. Required for normal brain development, especially for normal development of the pituitary gland and the olfactory bulb. Functions as a tyrosine phosphatase. Mediates dephosphorylation of NTRK1, NTRK2 and NTRK3. Plays a role in down-regulation of signaling cascades that lead to the activation of Akt and MAP kinases. Down-regulates TLR9-mediated activation of NF-kappa-B, as well as production of TNF, interferon alpha and interferon beta. This Homo sapiens (Human) protein is Receptor-type tyrosine-protein phosphatase S (PTPRS).